Reading from the N-terminus, the 86-residue chain is Large ribosomal subunit protein bL31B (86 aa).

This sequence belongs to the bacterial ribosomal protein bL31 family. Type B subfamily. In terms of assembly, part of the 50S ribosomal subunit.

This chain is Large ribosomal subunit protein bL31B, found in Cupriavidus necator (strain ATCC 17699 / DSM 428 / KCTC 22496 / NCIMB 10442 / H16 / Stanier 337) (Ralstonia eutropha).